Consider the following 210-residue polypeptide: uncharacterized protein (210 aa).

The N-terminal stretch at 1–20 is a signal peptide; sequence MRVITLSGITLFLLASLASA. The Lumenal portion of the chain corresponds to 21–175; the sequence is IELTFKLENQ…YSTVKSTQAR (155 aa). One can recognise a GOLD domain in the interval 32–115; the sequence is KQCYYLDSFH…DKIVTMEITM (84 aa). Asn-165 carries N-linked (GlcNAc...) asparagine glycosylation. The chain crosses the membrane as a helical span at residues 176–196; it reads IFWFSLAESIMVVALSALQVF. Residues 197 to 210 lie on the Cytoplasmic side of the membrane; that stretch reads IVKTFFKRSGRRGV.

It belongs to the EMP24/GP25L family.

The protein resides in the endoplasmic reticulum membrane. This is an uncharacterized protein from Schizosaccharomyces pombe (strain 972 / ATCC 24843) (Fission yeast).